The following is a 37-amino-acid chain: MKVYPSIRIMCNKCRIIRRKGIIRVICPNSKHKQRQK.

It belongs to the bacterial ribosomal protein bL36 family.

It localises to the plastid. This chain is Large ribosomal subunit protein bL36c, found in Helicosporidium sp. subsp. Simulium jonesii (Green alga).